The primary structure comprises 1320 residues: Inner centromere protein A (1320 aa).

5 disordered regions span residues 53–75 (KNSN…NNIS), 426–447 (QEKQ…QPVV), 611–679 (NEPI…VVPP), 701–877 (EEEE…NTAS), and 896–1215 (TKSP…DGDE). Low complexity-rich tracts occupy residues 54–75 (NSNY…NNIS), 429–447 (QQQQ…QPVV), and 615–640 (QQPS…SSSS). The stretch at 221–444 (QQNQFQEQHK…KQQEKQQQQQ (224 aa)) forms a coiled coil. Polar residues predominate over residues 653-668 (TIVTSKPTNKVQPQSL). Low complexity predominate over residues 669–679 (NSNINNNVVPP). Residues 683-855 (AAIANKLKKQ…QKKKTVQTIL (173 aa)) are a coiled coil. The segment covering 701-835 (EEEERLRKKQ…QEKEKQEKQK (135 aa)) has biased composition (basic and acidic residues). The span at 851-863 (VQTILPTPQTPSR) shows a compositional bias: polar residues. A compositionally biased stretch (low complexity) spans 864–877 (SANNNYDDAANTAS). 2 stretches are compositionally biased toward acidic residues: residues 908–926 (DDQD…ENSE) and 934–951 (QDDS…DSDE). Residues 965–977 (NKNKNSNNSNNNN) show a composition bias toward low complexity. Residues 981–1000 (QSRKDKSIVFDSDSLNRNHN) are compositionally biased toward basic and acidic residues. Composition is skewed to low complexity over residues 1026 to 1040 (SNMK…YSNS) and 1047 to 1061 (SPPS…SSES). Over residues 1062 to 1071 (NDCFSPLTPT) the composition is skewed to polar residues. Positions 1072–1096 (NNNKINNNKINNNNSNNNSFNNSNS) are enriched in low complexity. Positions 1120–1136 (SKTSPFLTIRNTPSPLK) are enriched in polar residues. The segment covering 1143–1154 (NMSSASSLSSFD) has biased composition (low complexity). Residues 1155–1170 (SDNDSDYNDNDIDDGE) are compositionally biased toward acidic residues. The span at 1175–1187 (PNENFTTPLKNQE) shows a compositional bias: polar residues. Over residues 1188–1198 (NNNNNNSNNSN) the composition is skewed to low complexity. The span at 1199 to 1209 (TQYPIITSPPS) shows a compositional bias: polar residues.

It belongs to the INCENP family. In terms of assembly, interacts with aurK.

The protein localises to the chromosome. It is found in the centromere. Its subcellular location is the cytoplasm. The protein resides in the cytoskeleton. It localises to the spindle. The protein localises to the nucleus. It is found in the cleavage furrow. Its function is as follows. Chromosomal passenger protein that seems to be required for chromosome segregation and the onset of cytokinesis during mitosis. Plays a key role in the abscission of daughter cells at the end of cytokinesis and in the establishment or maintenance of a bipolar spindle. The sequence is that of Inner centromere protein A (icpA) from Dictyostelium discoideum (Social amoeba).